The sequence spans 182 residues: P21 prophage-derived terminase small subunit (182 aa).

An ATP-binding site is contributed by 31-36 (SKGSKG).

This sequence belongs to the terminase small subunit family. In terms of assembly, heterooligomer of gp1 and gp2.

In terms of biological role, involved in the initiation of the phage DNA packaging into the prohead. Processes replicating concatemeric DNA into pieces of unit length with cohesive ends. This chain is P21 prophage-derived terminase small subunit (nohA), found in Escherichia coli O6:H1 (strain CFT073 / ATCC 700928 / UPEC).